The sequence spans 464 residues: Arabinose-proton symporter (464 aa).

A run of 12 helical transmembrane segments spans residues 21–43 (GFVI…DTAV), 63–85 (GLVI…FLSD), 92–111 (ILMT…ALSQ), 116–138 (LIIA…VTYI), 150–172 (LSSL…NLAV), 185–207 (GWRW…LLVV), 266–288 (ALVI…ITYY), 303–325 (GFVT…VLLI), 332–354 (KLMS…SFYF), 364–386 (VLIL…IMIS), 398–420 (AGIA…PMMI), and 424–446 (GLAY…VVTI).

It belongs to the major facilitator superfamily. Sugar transporter (TC 2.A.1.1) family.

It is found in the cell membrane. The catalysed reaction is L-arabinose(in) + H(+)(in) = L-arabinose(out) + H(+)(out). The enzyme catalyses D-galactose(in) + H(+)(in) = D-galactose(out) + H(+)(out). It carries out the reaction D-xylose(in) + H(+)(in) = D-xylose(out) + H(+)(out). Functionally, uptake of L-arabinose across the cytoplasmic membrane with the concomitant transport of protons into the cell (symport system). In the presence of inducing amounts of L-arabinose, can import both D-galactose and D-xylose. Can also transport the disaccharide alpha-1,5-arabinobiose. The polypeptide is Arabinose-proton symporter (araE) (Bacillus subtilis (strain 168)).